The sequence spans 201 residues: Mediator of RNA polymerase II transcription subunit 22 (201 aa).

The stretch at 93–123 (SVNEAIDQRNQQLRALQEECDRKLIALRDEV) forms a coiled coil. The segment at 166–201 (LSAPLLASPEPSAGGPLQAAAPTHSHAGGPGPTEHA) is disordered.

As to quaternary structure, component of the Mediator complex, which is composed of MED1, MED4, MED6, MED7, MED8, MED9, MED10, MED11, MED12, MED13, MED13L, MED14, MED15, MED16, MED17, MED18, MED19, MED20, MED21, MED22, MED23, MED24, MED25, MED26, MED27, MED29, MED30, MED31, CCNC, CDK8 and CDC2L6/CDK11. The MED12, MED13, CCNC and CDK8 subunits form a distinct module termed the CDK8 module. Mediator containing the CDK8 module is less active than Mediator lacking this module in supporting transcriptional activation. Individual preparations of the Mediator complex lacking one or more distinct subunits have been variously termed ARC, CRSP, DRIP, PC2, SMCC and TRAP.

It is found in the nucleus. Its function is as follows. Component of the Mediator complex, a coactivator involved in the regulated transcription of nearly all RNA polymerase II-dependent genes. Mediator functions as a bridge to convey information from gene-specific regulatory proteins to the basal RNA polymerase II transcription machinery. Mediator is recruited to promoters by direct interactions with regulatory proteins and serves as a scaffold for the assembly of a functional preinitiation complex with RNA polymerase II and the general transcription factors. This is Mediator of RNA polymerase II transcription subunit 22 (MED22) from Bos taurus (Bovine).